The primary structure comprises 167 residues: Leptin (167 aa).

An N-terminal signal peptide occupies residues methionine 1–alanine 21. Residues cysteine 117 and cysteine 167 are joined by a disulfide bond.

The protein belongs to the leptin family.

The protein resides in the secreted. Functionally, key player in the regulation of energy balance and body weight control. Once released into the circulation, has central and peripheral effects by binding LEPR, found in many tissues, which results in the activation of several major signaling pathways. In the hypothalamus, acts as an appetite-regulating factor that induces a decrease in food intake and an increase in energy consumption by inducing anorexinogenic factors and suppressing orexigenic neuropeptides, also regulates bone mass and secretion of hypothalamo-pituitary-adrenal hormones. In the periphery, increases basal metabolism, influences reproductive function, regulates pancreatic beta-cell function and insulin secretion, is pro-angiogenic for endothelial cell and affects innate and adaptive immunity. In the arcuate nucleus of the hypothalamus, activates by depolarization POMC neurons inducing FOS and SOCS3 expression to release anorexigenic peptides and inhibits by hyperpolarization NPY neurons inducing SOCS3 with a consequent reduction on release of orexigenic peptides. In addition to its known satiety inducing effect, has a modulatory role in nutrient absorption. In the intestine, reduces glucose absorption by enterocytes by activating PKC and leading to a sequential activation of p38, PI3K and ERK signaling pathways which exerts an inhibitory effect on glucose absorption. Acts as a growth factor on certain tissues, through the activation of different signaling pathways increases expression of genes involved in cell cycle regulation such as CCND1, via JAK2-STAT3 pathway, or VEGFA, via MAPK1/3 and PI3K-AKT1 pathways. May also play an apoptotic role via JAK2-STAT3 pathway and up-regulation of BIRC5 expression. Pro-angiogenic, has mitogenic activity on vascular endothelial cells and plays a role in matrix remodeling by regulating the expression of matrix metalloproteinases (MMPs) and tissue inhibitors of metalloproteinases (TIMPs). In innate immunity, modulates the activity and function of neutrophils by increasing chemotaxis and the secretion of oxygen radicals. Increases phagocytosis by macrophages and enhances secretion of pro-inflammatory mediators. Increases cytotoxic ability of NK cells. Plays a pro-inflammatory role, in synergy with IL1B, by inducing NOS2 which promotes the production of IL6, IL8 and Prostaglandin E2, through a signaling pathway that involves JAK2, PI3K, MAP2K1/MEK1 and MAPK14/p38. In adaptive immunity, promotes the switch of memory T-cells towards T helper-1 cell immune responses. Increases CD4(+)CD25(-) T-cell proliferation and reduces autophagy during TCR (T-cell receptor) stimulation, through MTOR signaling pathway activation and BCL2 up-regulation. The sequence is that of Leptin (LEP) from Macaca mulatta (Rhesus macaque).